Here is a 215-residue protein sequence, read N- to C-terminus: Pyrrolidone-carboxylate peptidase (215 aa).

Residues E80, C143, and H167 contribute to the active site.

Belongs to the peptidase C15 family. In terms of assembly, homotetramer.

It localises to the cytoplasm. The catalysed reaction is Release of an N-terminal pyroglutamyl group from a polypeptide, the second amino acid generally not being Pro.. Its function is as follows. Removes 5-oxoproline from various penultimate amino acid residues except L-proline. The chain is Pyrrolidone-carboxylate peptidase from Bacillus anthracis.